A 257-amino-acid chain; its full sequence is Glucosamine-6-phosphate deaminase (257 aa).

D64 (proton acceptor; for enolization step) is an active-site residue. Catalysis depends on N133, which acts as the For ring-opening step. H135 functions as the Proton acceptor; for ring-opening step in the catalytic mechanism. The For ring-opening step role is filled by E140.

Belongs to the glucosamine/galactosamine-6-phosphate isomerase family. NagB subfamily.

The catalysed reaction is alpha-D-glucosamine 6-phosphate + H2O = beta-D-fructose 6-phosphate + NH4(+). Its pathway is amino-sugar metabolism; N-acetylneuraminate degradation; D-fructose 6-phosphate from N-acetylneuraminate: step 5/5. Catalyzes the reversible isomerization-deamination of glucosamine 6-phosphate (GlcN6P) to form fructose 6-phosphate (Fru6P) and ammonium ion. The sequence is that of Glucosamine-6-phosphate deaminase from Corynebacterium urealyticum (strain ATCC 43042 / DSM 7109).